A 153-amino-acid chain; its full sequence is Nucleoside diphosphate kinase (153 aa).

The ATP site is built by K13, F61, R89, T95, R106, and N116. H119 functions as the Pros-phosphohistidine intermediate in the catalytic mechanism.

The protein belongs to the NDK family. As to quaternary structure, homohexamer. Mg(2+) serves as cofactor.

The protein localises to the cytoplasm. The enzyme catalyses a 2'-deoxyribonucleoside 5'-diphosphate + ATP = a 2'-deoxyribonucleoside 5'-triphosphate + ADP. It catalyses the reaction a ribonucleoside 5'-diphosphate + ATP = a ribonucleoside 5'-triphosphate + ADP. Its function is as follows. Major role in the synthesis of nucleoside triphosphates other than ATP. The ATP gamma phosphate is transferred to the NDP beta phosphate via a ping-pong mechanism, using a phosphorylated active-site intermediate. The sequence is that of Nucleoside diphosphate kinase (NDK) from Brugia malayi (Filarial nematode worm).